The following is a 153-amino-acid chain: Histone H2B.3 (153 aa).

2 stretches are compositionally biased toward basic and acidic residues: residues 1-10 (MAPKKDEKPA) and 20-54 (AKAE…GEKK). The disordered stretch occupies residues 1–60 (MAPKKDEKPATAEAGAEAPAKAEAKPKAEKAGKKAKKEPAKKAAKEPKGDGEKKDKKKKK). An N6-acetyllysine mark is found at lysine 41 and lysine 42. A Glycyl lysine isopeptide (Lys-Gly) (interchain with G-Cter in ubiquitin) cross-link involves residue lysine 149.

Belongs to the histone H2B family. As to quaternary structure, the nucleosome is a histone octamer containing two molecules each of H2A, H2B, H3 and H4 assembled in one H3-H4 heterotetramer and two H2A-H2B heterodimers. The octamer wraps approximately 147 bp of DNA. Post-translationally, the N-terminus is blocked. In terms of processing, can be acetylated to form H2BK33ac and H2BK34ac. Acetylated mainly on the ubiquitinated form. Monoubiquitinated to form H2BK143ub1; which is increased during the light period and may give a specific tag for epigenetic transcriptional activation.

It is found in the nucleus. It localises to the chromosome. Its function is as follows. Core component of nucleosome. Nucleosomes wrap and compact DNA into chromatin, limiting DNA accessibility to the cellular machineries which require DNA as a template. Histones thereby play a central role in transcription regulation, DNA repair, DNA replication and chromosomal stability. DNA accessibility is regulated via a complex set of post-translational modifications of histones, also called histone code, and nucleosome remodeling. The sequence is that of Histone H2B.3 from Chlamydomonas reinhardtii (Chlamydomonas smithii).